We begin with the raw amino-acid sequence, 138 residues long: Large ribosomal subunit protein uL16c (138 aa).

The segment at 1 to 21 is disordered; that stretch reads MLSPQKTKFRKQHRGRMKGVS. Basic residues predominate over residues 7 to 21; that stretch reads TKFRKQHRGRMKGVS.

Belongs to the universal ribosomal protein uL16 family. In terms of assembly, part of the 50S ribosomal subunit.

Its subcellular location is the plastid. It is found in the chloroplast. This Cycas taitungensis (Prince sago) protein is Large ribosomal subunit protein uL16c.